The following is a 930-amino-acid chain: Translation initiation factor IF-2 (930 aa).

Residues 50 to 67 (FKPAAAPKVEAKPAAPKV) are compositionally biased toward low complexity. Disordered stretches follow at residues 50-196 (FKPA…RIDF) and 260-346 (EVVP…HELP). Composition is skewed to basic and acidic residues over residues 68–90 (SAEK…EAKP) and 110–125 (FKAE…AERR). Low complexity predominate over residues 129-141 (KGNNRDQQQNGNR). 2 stretches are compositionally biased toward basic and acidic residues: residues 157–172 (RDNR…EQGQ) and 262–295 (VPEK…DGPR). Residues 309–318 (NQKNSNWNNN) are compositionally biased toward low complexity. The span at 337–346 (VTERKFHELP) shows a compositional bias: basic and acidic residues. Residues 432–599 (ERPPVVTIMG…TVLLVAEIQE (168 aa)) enclose the tr-type G domain. A G1 region spans residues 441–448 (GHVDHGKT). Position 441-448 (441-448 (GHVDHGKT)) interacts with GTP. Positions 466 to 470 (GITQH) are G2. The tract at residues 487-490 (DTPG) is G3. GTP contacts are provided by residues 487 to 491 (DTPGH) and 541 to 544 (NKID). A G4 region spans residues 541–544 (NKID). A G5 region spans residues 577 to 579 (SAK).

It belongs to the TRAFAC class translation factor GTPase superfamily. Classic translation factor GTPase family. IF-2 subfamily.

The protein resides in the cytoplasm. One of the essential components for the initiation of protein synthesis. Protects formylmethionyl-tRNA from spontaneous hydrolysis and promotes its binding to the 30S ribosomal subunits. Also involved in the hydrolysis of GTP during the formation of the 70S ribosomal complex. In Streptococcus pneumoniae serotype 19F (strain G54), this protein is Translation initiation factor IF-2.